Reading from the N-terminus, the 243-residue chain is Ubiquinone biosynthesis O-methyltransferase (243 aa).

Positions 44, 64, 85, and 129 each coordinate S-adenosyl-L-methionine.

It belongs to the methyltransferase superfamily. UbiG/COQ3 family.

The catalysed reaction is a 3-demethylubiquinol + S-adenosyl-L-methionine = a ubiquinol + S-adenosyl-L-homocysteine + H(+). The enzyme catalyses a 3-(all-trans-polyprenyl)benzene-1,2-diol + S-adenosyl-L-methionine = a 2-methoxy-6-(all-trans-polyprenyl)phenol + S-adenosyl-L-homocysteine + H(+). The protein operates within cofactor biosynthesis; ubiquinone biosynthesis. In terms of biological role, O-methyltransferase that catalyzes the 2 O-methylation steps in the ubiquinone biosynthetic pathway. This chain is Ubiquinone biosynthesis O-methyltransferase, found in Erwinia tasmaniensis (strain DSM 17950 / CFBP 7177 / CIP 109463 / NCPPB 4357 / Et1/99).